We begin with the raw amino-acid sequence, 167 residues long: NADH-quinone oxidoreductase subunit B (167 aa).

[4Fe-4S] cluster-binding residues include Cys-40, Cys-41, Cys-105, and Cys-134.

It belongs to the complex I 20 kDa subunit family. As to quaternary structure, NDH-1 is composed of 14 different subunits. Subunits NuoB, C, D, E, F, and G constitute the peripheral sector of the complex. It depends on [4Fe-4S] cluster as a cofactor.

The protein localises to the cell inner membrane. The catalysed reaction is a quinone + NADH + 5 H(+)(in) = a quinol + NAD(+) + 4 H(+)(out). Its function is as follows. NDH-1 shuttles electrons from NADH, via FMN and iron-sulfur (Fe-S) centers, to quinones in the respiratory chain. The immediate electron acceptor for the enzyme in this species is believed to be ubiquinone. Couples the redox reaction to proton translocation (for every two electrons transferred, four hydrogen ions are translocated across the cytoplasmic membrane), and thus conserves the redox energy in a proton gradient. The protein is NADH-quinone oxidoreductase subunit B of Campylobacter jejuni subsp. jejuni serotype O:6 (strain 81116 / NCTC 11828).